Reading from the N-terminus, the 179-residue chain is Transcription factor 21 (179 aa).

Positions 20–87 (CDGLKMDSNK…QVQRNAANAR (68 aa)) are disordered. A compositionally biased stretch (low complexity) spans 33-46 (TSNESTEESSNCEN). The segment covering 70 to 80 (SGVSQEGKQVQ) has biased composition (polar residues). The bHLH domain occupies 79–131 (VQRNAANARERARMRVLSKAFSRLKTTLPWVPPDTKLSKLDTLRLASSYIAHL).

In terms of assembly, efficient DNA binding requires dimerization with another bHLH protein. Forms a heterodimer with TCF3 and binds the E box (5'-CANNTG-3').

It localises to the nucleus. Functionally, involved in epithelial-mesenchymal interactions in kidney and lung morphogenesis that include epithelial differentiation and branching morphogenesis. May play a role in the specification or differentiation of one or more subsets of epicardial cell types. The sequence is that of Transcription factor 21 (TCF21) from Homo sapiens (Human).